Reading from the N-terminus, the 356-residue chain is Cytochrome c oxidase subunit 2 (356 aa).

The N-terminal stretch at 1 to 23 (MNKGLCNWRLFSLFGMMALLLAG) is a signal peptide. Residues 24-259 (CGKPFLSTLQ…QNAKKPVVTD (236 aa)) form a cytochrome c oxidase subunit II region. A run of 2 helical transmembrane segments spans residues 45–65 (LMLL…IIFV) and 93–113 (IIWT…TVLT). 4 residues coordinate Cu cation: His178, Cys219, Cys223, and His227. One can recognise a Cytochrome c domain in the interval 260 to 356 (PVAKEGEAIF…TKYLMSLKVE (97 aa)). Residues Cys273, Cys276, His277, and Met331 each coordinate heme c.

It belongs to the cytochrome c oxidase subunit 2 family. Cu cation serves as cofactor. Heme c is required as a cofactor.

It is found in the cell membrane. It catalyses the reaction 4 Fe(II)-[cytochrome c] + O2 + 8 H(+)(in) = 4 Fe(III)-[cytochrome c] + 2 H2O + 4 H(+)(out). Subunits I and II form the functional core of the enzyme complex. Electrons originating in cytochrome c are transferred via heme a and Cu(A) to the binuclear center formed by heme a3 and Cu(B). The polypeptide is Cytochrome c oxidase subunit 2 (ctaC) (Bacillus sp. (strain PS3)).